We begin with the raw amino-acid sequence, 631 residues long: uncharacterized protein (631 aa).

This is an uncharacterized protein from Escherichia coli (strain K12).